The chain runs to 327 residues: E3 ubiquitin-protein ligase SINAT4 (327 aa).

The interval 1 to 27 is disordered; that stretch reads METDSMECVSSTGNEIHQNGNGHQSYQ. The segment covering 8–27 has biased composition (polar residues); the sequence is CVSSTGNEIHQNGNGHQSYQ. The RING-type zinc-finger motif lies at 64–100; sequence CPVCTYSMYPPIHQCHNGHTLCSTCKVRVHNRCPTCR. The tract at residues 114–307 is SBD; the sequence is VAESLELPCK…KELKLRVTGK (194 aa). An SIAH-type zinc finger spans residues 117 to 177; it reads SLELPCKFYN…LVAHLRDDHK (61 aa). Zn(2+) contacts are provided by C122, C129, H141, C145, C152, C159, H171, and H176.

The protein belongs to the SINA (Seven in absentia) family. In terms of assembly, interacts with SINAT6. Interacts with WAV3. Interacts with FREE1. Interacts with ELC/VPS23A.

Its subcellular location is the endosome. It localises to the multivesicular body. It is found in the cytoplasmic vesicle. The protein resides in the autophagosome. The enzyme catalyses S-ubiquitinyl-[E2 ubiquitin-conjugating enzyme]-L-cysteine + [acceptor protein]-L-lysine = [E2 ubiquitin-conjugating enzyme]-L-cysteine + N(6)-ubiquitinyl-[acceptor protein]-L-lysine.. Its pathway is protein modification; protein ubiquitination. In terms of biological role, E3 ubiquitin-protein ligase that mediates ubiquitination and subsequent proteasomal degradation of target proteins. E3 ubiquitin ligases accept ubiquitin from an E2 ubiquitin-conjugating enzyme in the form of a thioester and then directly transfers the ubiquitin to targeted substrates. It probably triggers the ubiquitin-mediated degradation of different substrates. Modulates directly the ubiquitination and proteasomal-dependent degradation of FREE1, a component of the ESCRT-I complex. Modulates directly the ubiquitination and proteasomal-dependent degradation of ELC/VPS23A, a component of the ESCRT-I complex. The polypeptide is E3 ubiquitin-protein ligase SINAT4 (Arabidopsis thaliana (Mouse-ear cress)).